A 339-amino-acid polypeptide reads, in one-letter code: MRVAVDGMGGDHSPSAVVKGCVQALEEFKDIEIYITGPEDILKEAFSKFKYDKERVTFIDAKEVISTNEHPAMAVKKKKDSSLVKALRLVKDNQCEAVISAGSTGAFLTGCTLIVGRIKGVERPALAPVMPGKNGPFMIIDAGANVDSKPSYLVQFAKMGEVYFKSVMDVNNPKVGLVNIGEEEEKGNDLTKATYKLLKEERDINFIGNVEPREVSTGDVDVLVCDGFVGNTVLKMYEGVASTILSMIKSEVKSSFLAKLGVPFLAPALMNLKKKMDYKEYGGAPFLGVKGICVKAHGSSDAKAFKNAIRQARKFHENDLIGKLSEEITKKSFDNQKNI.

The protein belongs to the PlsX family. In terms of assembly, homodimer. Probably interacts with PlsY.

The protein localises to the cytoplasm. The catalysed reaction is a fatty acyl-[ACP] + phosphate = an acyl phosphate + holo-[ACP]. The protein operates within lipid metabolism; phospholipid metabolism. Functionally, catalyzes the reversible formation of acyl-phosphate (acyl-PO(4)) from acyl-[acyl-carrier-protein] (acyl-ACP). This enzyme utilizes acyl-ACP as fatty acyl donor, but not acyl-CoA. The protein is Putative phosphate acyltransferase of Clostridium perfringens (strain 13 / Type A).